A 984-amino-acid chain; its full sequence is Vacuolar sorting protein 3 (984 aa).

A CNH domain is found at 21–339; it reads KIRALSLSPI…GCGPSLLAAD (319 aa). The CHCR repeat unit spans residues 663–844; sequence VLTSDKRTEE…YLDPQNGKEP (182 aa).

The protein belongs to the TRAP1 family. As to quaternary structure, component of the class C core vacuole/endosome tethering (CORVET) complex. Their common core is composed of the class C Vps core proteins VPS11, VCL1, VPS18 and VPS33, which in CORVET further associates with VPS3. Interacts directly with VPS11. Binds to RABF2A and RABF2B.

It localises to the endosome membrane. The protein resides in the cytoplasm. In terms of biological role, essential protein required during embryogenesis. Believed to act as a component of the putative class C core vacuole/endosome tethering (CORVET) endosomal tethering complexes. CORVET is required for vacuolar transport of SYP22. Involved in root development. Plays a role in vesicle-mediated protein trafficking of the endocytic membrane transport pathway. The polypeptide is Vacuolar sorting protein 3 (Arabidopsis thaliana (Mouse-ear cress)).